We begin with the raw amino-acid sequence, 134 residues long: Small ribosomal subunit protein uS8c (134 aa).

This sequence belongs to the universal ribosomal protein uS8 family. As to quaternary structure, part of the 30S ribosomal subunit.

It localises to the plastid. Its subcellular location is the chloroplast. Functionally, one of the primary rRNA binding proteins, it binds directly to 16S rRNA central domain where it helps coordinate assembly of the platform of the 30S subunit. In Nicotiana tomentosiformis (Tobacco), this protein is Small ribosomal subunit protein uS8c (rps8).